The chain runs to 337 residues: GTPase Obg (337 aa).

The 159-residue stretch at 4–162 (SNFIDYVKVC…AWVILELKVL (159 aa)) folds into the Obg domain. Positions 163–329 (ADVGLVGFPN…LKDLLWTTMN (167 aa)) constitute an OBG-type G domain. GTP is bound by residues 169 to 176 (GFPNAGKS), 194 to 198 (FTTLA), 216 to 219 (DIPG), 283 to 286 (SKSD), and 310 to 312 (SSY). 2 residues coordinate Mg(2+): Ser-176 and Thr-196.

The protein belongs to the TRAFAC class OBG-HflX-like GTPase superfamily. OBG GTPase family. Monomer. Requires Mg(2+) as cofactor.

It is found in the cytoplasm. Functionally, an essential GTPase which binds GTP, GDP and possibly (p)ppGpp with moderate affinity, with high nucleotide exchange rates and a fairly low GTP hydrolysis rate. Plays a role in control of the cell cycle, stress response, ribosome biogenesis and in those bacteria that undergo differentiation, in morphogenesis control. The protein is GTPase Obg of Cytophaga hutchinsonii (strain ATCC 33406 / DSM 1761 / CIP 103989 / NBRC 15051 / NCIMB 9469 / D465).